Here is a 169-residue protein sequence, read N- to C-terminus: uncharacterized protein (169 aa).

The HTH asnC-type domain maps to 18 to 79; that stretch reads LDRADVALLN…IVSPKAVGRP (62 aa). Positions 37-56 form a DNA-binding region, H-T-H motif; it reads SEELADKVGLSPTACQRRLK.

This is an uncharacterized protein from Sinorhizobium fredii (strain NBRC 101917 / NGR234).